The primary structure comprises 316 residues: 4-hydroxy-3-methylbut-2-enyl diphosphate reductase (316 aa).

Position 12 (cysteine 12) interacts with [4Fe-4S] cluster. Positions 41 and 74 each coordinate (2E)-4-hydroxy-3-methylbut-2-enyl diphosphate. Histidine 41 and histidine 74 together coordinate dimethylallyl diphosphate. Isopentenyl diphosphate is bound by residues histidine 41 and histidine 74. Cysteine 96 is a [4Fe-4S] cluster binding site. Histidine 124 serves as a coordination point for (2E)-4-hydroxy-3-methylbut-2-enyl diphosphate. Histidine 124 provides a ligand contact to dimethylallyl diphosphate. Isopentenyl diphosphate is bound at residue histidine 124. Glutamate 126 acts as the Proton donor in catalysis. Residue threonine 167 coordinates (2E)-4-hydroxy-3-methylbut-2-enyl diphosphate. Cysteine 197 is a [4Fe-4S] cluster binding site. (2E)-4-hydroxy-3-methylbut-2-enyl diphosphate is bound by residues serine 225, serine 226, asparagine 227, and serine 269. Dimethylallyl diphosphate is bound by residues serine 225, serine 226, asparagine 227, and serine 269. Residues serine 225, serine 226, asparagine 227, and serine 269 each coordinate isopentenyl diphosphate.

Belongs to the IspH family. In terms of assembly, homodimer. The cofactor is [4Fe-4S] cluster.

The catalysed reaction is isopentenyl diphosphate + 2 oxidized [2Fe-2S]-[ferredoxin] + H2O = (2E)-4-hydroxy-3-methylbut-2-enyl diphosphate + 2 reduced [2Fe-2S]-[ferredoxin] + 2 H(+). It carries out the reaction dimethylallyl diphosphate + 2 oxidized [2Fe-2S]-[ferredoxin] + H2O = (2E)-4-hydroxy-3-methylbut-2-enyl diphosphate + 2 reduced [2Fe-2S]-[ferredoxin] + 2 H(+). Its pathway is isoprenoid biosynthesis; dimethylallyl diphosphate biosynthesis; dimethylallyl diphosphate from (2E)-4-hydroxy-3-methylbutenyl diphosphate: step 1/1. The protein operates within isoprenoid biosynthesis; isopentenyl diphosphate biosynthesis via DXP pathway; isopentenyl diphosphate from 1-deoxy-D-xylulose 5-phosphate: step 6/6. In terms of biological role, catalyzes the conversion of 1-hydroxy-2-methyl-2-(E)-butenyl 4-diphosphate (HMBPP) into a mixture of isopentenyl diphosphate (IPP) and dimethylallyl diphosphate (DMAPP). Acts in the terminal step of the DOXP/MEP pathway for isoprenoid precursor biosynthesis. This chain is 4-hydroxy-3-methylbut-2-enyl diphosphate reductase, found in Salmonella agona (strain SL483).